Reading from the N-terminus, the 337-residue chain is Monoacylglycerol lipase abhd6-B (337 aa).

Residues 1 to 19 lie on the Extracellular side of the membrane; sequence MDIDVLNMFLVAGGTLLVP. The chain crosses the membrane as a helical; Signal-anchor for type II membrane protein span at residues 20–42; sequence LLAFMTSFLLWPAALIRIYYWYW. Residues 43 to 337 lie on the Cytoplasmic side of the membrane; the sequence is RRALGMQVKY…QSTDNHKKHD (295 aa). In terms of domain architecture, AB hydrolase-1 spans 72–313; the sequence is PSVLMLHGFS…CGHSVVMERP (242 aa). The active-site Nucleophile is Ser148. Catalysis depends on charge relay system residues Asp278 and His306.

The protein belongs to the AB hydrolase superfamily.

It is found in the late endosome membrane. It localises to the lysosome membrane. Its subcellular location is the mitochondrion membrane. The catalysed reaction is Hydrolyzes glycerol monoesters of long-chain fatty acids.. The enzyme catalyses 1-octanoylglycerol + H2O = octanoate + glycerol + H(+). It catalyses the reaction 1-decanoylglycerol + H2O = decanoate + glycerol + H(+). It carries out the reaction 1-dodecanoylglycerol + H2O = dodecanoate + glycerol + H(+). The catalysed reaction is 1-tetradecanoylglycerol + H2O = tetradecanoate + glycerol + H(+). The enzyme catalyses 2-hexadecanoylglycerol + H2O = glycerol + hexadecanoate + H(+). It catalyses the reaction 2-(9Z-octadecenoyl)-glycerol + H2O = glycerol + (9Z)-octadecenoate + H(+). It carries out the reaction 1-(9Z-octadecenoyl)-glycerol + H2O = glycerol + (9Z)-octadecenoate + H(+). The catalysed reaction is 2-(9Z,12Z-octadecadienoyl)-glycerol + H2O = (9Z,12Z)-octadecadienoate + glycerol + H(+). The enzyme catalyses 2-(5Z,8Z,11Z,14Z-eicosatetraenoyl)-glycerol + H2O = glycerol + (5Z,8Z,11Z,14Z)-eicosatetraenoate + H(+). It catalyses the reaction 1-(5Z,8Z,11Z,14Z-eicosatetraenoyl)-glycerol + H2O = glycerol + (5Z,8Z,11Z,14Z)-eicosatetraenoate + H(+). It carries out the reaction 1-(9Z,12Z-octadecadienoyl)-glycerol + H2O = (9Z,12Z)-octadecadienoate + glycerol + H(+). The catalysed reaction is 3-(9Z-octadecenoyl)-sn-glycero-1-phospho-(3'-(9Z-octadecenoyl)-1'-sn-glycerol) + H2O = 3-(9Z-octadecenoyl)-sn-glycero-1-phospho-(1'-sn-glycerol) + (9Z)-octadecenoate + H(+). The enzyme catalyses (S,S)-2-(9Z-octadecenoyl)-sn-glycero-1-phospho-(2'-(9Z-octadecenoyl)-1'-sn-glycerol) + H2O = (S,S)-2-(9Z-octadecenoyl)-sn-glycero-1-phospho-(1'-sn-glycerol) + (9Z)-octadecenoate + H(+). It catalyses the reaction (R,R)-2-(9Z-octadecenoyl)-sn-glycero-3-phospho-(2'-(9Z-octadecenoyl)-3'-sn-glycerol) + H2O = (R,R)-2-(9Z-octadecenoyl)-sn-glycero-3-phospho-(3'-sn-glycerol) + (9Z)-octadecenoate + H(+). In terms of biological role, lipase that preferentially hydrolysis medium-chain saturated monoacylglycerols including 2-arachidonoylglycerol. Through 2-arachidonoylglycerol degradation may regulate endocannabinoid signaling pathways. Also has a lysophosphatidyl lipase activity with a preference for lysophosphatidylglycerol among other lysophospholipids. Also able to degrade bis(monoacylglycero)phosphate (BMP) and constitutes the major enzyme for BMP catabolism. BMP, also known as lysobisphosphatidic acid, is enriched in late endosomes and lysosomes and plays a key role in the formation of intraluminal vesicles and in lipid sorting. This Xenopus laevis (African clawed frog) protein is Monoacylglycerol lipase abhd6-B (abhd6-b).